The chain runs to 435 residues: Temperature-sensitive sn-2 acyl-lipid omega-3 desaturase (ferredoxin), chloroplastic (435 aa).

Residues 1-42 (MASSVLSECGFRPLPRFYPKHTTSFASNPKPTFKFNPPLKPP) constitute a chloroplast transit peptide. The next 2 helical transmembrane spans lie at 111–131 (MSYVVRDVAIVFGLAAVAAYF) and 134–154 (WLLWPLYWFAQGTMFWALFVL). A Histidine box-1 motif is present at residues 156–160 (HDCGH). The Histidine box-2 signature appears at 192-196 (HRTHH). 2 helical membrane passes run 268–290 (VLTSTACWTAMAALLVCLNFVMG) and 297–319 (LYGIPYWIFVMWLDFVTYLHHHG). A Histidine box-3 motif is present at residues 359–363 (HVIHH).

The protein belongs to the fatty acid desaturase type 1 family.

The protein resides in the plastid. The protein localises to the chloroplast membrane. The enzyme catalyses a (7Z,10Z)-hexadecadienoyl-containing glycerolipid + 2 reduced [2Fe-2S]-[ferredoxin] + O2 + 2 H(+) = a (7Z,10Z,13Z)-hexadecatrienoyl-containing glycerolipid + 2 oxidized [2Fe-2S]-[ferredoxin] + 2 H2O. The catalysed reaction is a (9Z,12Z)-octadecadienoyl-containing glycerolipid + 2 reduced [2Fe-2S]-[ferredoxin] + O2 + 2 H(+) = (9Z,12Z,15Z)-octadecatrienoyl-containing glycerolipid + 2 oxidized [2Fe-2S]-[ferredoxin] + 2 H2O. It functions in the pathway lipid metabolism; polyunsaturated fatty acid biosynthesis. Chloroplast omega-3 fatty acid desaturase introduces the third double bond in the biosynthesis of 16:3 and 18:3 fatty acids, important constituents of plant membranes. It is thought to use ferredoxin as an electron donor and to act on fatty acids esterified to galactolipids, sulfolipids and phosphatidylglycerol. The chain is Temperature-sensitive sn-2 acyl-lipid omega-3 desaturase (ferredoxin), chloroplastic from Arabidopsis thaliana (Mouse-ear cress).